A 423-amino-acid polypeptide reads, in one-letter code: AP-1 complex subunit mu-2 (423 aa).

One can recognise an MHD domain in the interval 168-421 (KNEVFIDVIE…ITQSGDYQLR (254 aa)).

Belongs to the adaptor complexes medium subunit family. As to quaternary structure, adaptor protein complex 1 (AP-1) is a heterotetramer composed of two large adaptins (gamma-type subunit AP1G1 and beta-type subunit AP1B1), a medium adaptin (mu-type subunit AP1M1 or AP1M2) and a small adaptin (sigma-type subunit AP1S1 or AP1S2 or AP1S3). Interacts with P2X4. Post-translationally, phosphorylation of membrane-bound AP1M1/AP1M2 increases its affinity for sorting signals.

Its subcellular location is the cytoplasmic vesicle. It is found in the clathrin-coated vesicle membrane. It localises to the golgi apparatus. Functionally, subunit of clathrin-associated adaptor protein complex 1 that plays a role in protein sorting in the trans-Golgi network (TGN) and endosomes. The AP complexes mediate the recruitment of clathrin to membranes and the recognition of sorting signals within the cytosolic tails of transmembrane cargo molecules. The chain is AP-1 complex subunit mu-2 from Bos taurus (Bovine).